Reading from the N-terminus, the 278-residue chain is MTIIELLKALLLGFIEGMTEFAPVSSTGHMIIVDDMWLQTTDFLGKYSANTFKIVIQLGSILAVIVVFWKRLFSLIGLYKIEGEHDASGTHKLKLRHVLIGLLPAAVLGLLFEDFIDENLFSIDTVIIGLAAGAILMIAADKLGPKEPKTTSLDQISYRQAALVGLFQCISLWPGFSRSGSTISGGVFLGMNHRTAADFTFIMAVPIMFGASALSLVKNWEYINVGDLGFYVVGFIASFGFALLSIRFFLKLINKIKLVPFAIYRLVLAAVLAVIVYM.

6 helical membrane-spanning segments follow: residues 49–69 (ANTF…VVFW), 97–117 (HVLI…DFID), 120–140 (LFSI…MIAA), 197–217 (ADFT…LSLV), 226–246 (GDLG…LLSI), and 258–278 (LVPF…IVYM).

Belongs to the UppP family.

The protein localises to the cell membrane. It catalyses the reaction di-trans,octa-cis-undecaprenyl diphosphate + H2O = di-trans,octa-cis-undecaprenyl phosphate + phosphate + H(+). Its function is as follows. Catalyzes the dephosphorylation of undecaprenyl diphosphate (UPP). Confers resistance to bacitracin. This Exiguobacterium sibiricum (strain DSM 17290 / CCUG 55495 / CIP 109462 / JCM 13490 / 255-15) protein is Undecaprenyl-diphosphatase.